We begin with the raw amino-acid sequence, 155 residues long: Transcriptional repressor NrdR (155 aa).

A zinc finger lies at 3–34 (CPFCGHSSTQVLDSRVSEDGDTVRRRRRCEAC). One can recognise an ATP-cone domain in the interval 49–139 (PAIVKKNGSR…VYRSFEDVSE (91 aa)).

This sequence belongs to the NrdR family. It depends on Zn(2+) as a cofactor.

In terms of biological role, negatively regulates transcription of bacterial ribonucleotide reductase nrd genes and operons by binding to NrdR-boxes. The sequence is that of Transcriptional repressor NrdR from Cupriavidus metallidurans (strain ATCC 43123 / DSM 2839 / NBRC 102507 / CH34) (Ralstonia metallidurans).